The primary structure comprises 101 residues: Apolipoprotein C-II (101 aa).

An N-terminal signal peptide occupies residues 1 to 22; that stretch reads MGTRFLLALCLVLLVLGFEVQG. Positions 66 to 74 are lipid binding; the sequence is AVDEKLRDL. Residues 78-101 are lipoprotein lipase cofactor; the sequence is STAAMSTYTGIFTDQVLSVLKGEE.

Belongs to the apolipoprotein C2 family. Proapolipoprotein C-II is synthesized as a sialic acid containing glycoprotein which is subsequently desialylated prior to its proteolytic processing. In terms of processing, proapolipoprotein C-II, the major form found in plasma undergoes proteolytic cleavage of its N-terminal hexapeptide to generate apolipoprotein C-II, which occurs as the minor form in plasma.

It is found in the secreted. Its function is as follows. Component of chylomicrons, very low-density lipoproteins (VLDL), low-density lipoproteins (LDL), and high-density lipoproteins (HDL) in plasma. Plays an important role in lipoprotein metabolism as an activator of lipoprotein lipase. Both proapolipoprotein C-II and apolipoprotein C-II can activate lipoprotein lipase. This chain is Apolipoprotein C-II (APOC2), found in Macaca fascicularis (Crab-eating macaque).